The following is a 192-amino-acid chain: Fe/S biogenesis protein NfuA (192 aa).

Residues Cys150 and Cys153 each contribute to the [4Fe-4S] cluster site.

Belongs to the NfuA family. Homodimer. [4Fe-4S] cluster is required as a cofactor.

In terms of biological role, involved in iron-sulfur cluster biogenesis. Binds a 4Fe-4S cluster, can transfer this cluster to apoproteins, and thereby intervenes in the maturation of Fe/S proteins. Could also act as a scaffold/chaperone for damaged Fe/S proteins. This is Fe/S biogenesis protein NfuA from Ruthia magnifica subsp. Calyptogena magnifica.